The following is a 308-amino-acid chain: MEHLQKSTYGTIVQGPEAHCVQESSCLRILLVGKSGCGKSATGNSILRRPAFQSRLRGQSVTRTSQAETGTWEGRSILVVDTPPIFESKAQNQDMDKDIGDCYLLCAPGPHVLLLVTQLGRFTAEDAMAVRMVKEVFGVGVMRHMIVLFTRKEDLEEKSLEEFVTHTDNRSLRSLTQECGRRYCAFNNRASGEEQQGQLAELMALVRRLEQECEGSFHSNDLFLHAEALLREGYSVHQEAYRCYLAKVRQEVEKQRRELEEQEGSWIAKMICTVKSCWSSHTAACALLIVLGLTLLTTFINLCISRCK.

At 1–283 (MEHLQKSTYG…VKSCWSSHTA (283 aa)) the chain is on the cytoplasmic side. An AIG1-type G domain is found at 24–227 (SSCLRILLVG…HSNDLFLHAE (204 aa)). GTP-binding positions include 33 to 41 (GKSGCGKSA), Ser-54, 151 to 153 (RKE), and Asn-188. A helical; Anchor for type IV membrane protein transmembrane segment spans residues 284 to 304 (ACALLIVLGLTLLTTFINLCI). The Mitochondrial intermembrane portion of the chain corresponds to 305 to 308 (SRCK).

The protein belongs to the TRAFAC class TrmE-Era-EngA-EngB-Septin-like GTPase superfamily. AIG1/Toc34/Toc159-like paraseptin GTPase family. IAN subfamily. Interacts with BAD, BAK1, BAX, BCL2, BCL2L1/Bcl-xL and BCL2L11/BimEL. The interaction with BAX is increased, when cells initiate apoptosis upon IL2 withdrawal. Forms a complex with BCL2L1 or MCL1 and HSPA8/HSC70; the interaction between HSPA8 and BCL2L1 or MCL1 is impaired in the absence of GIMAP5. May interact (via N-terminus) with microtubules. In terms of tissue distribution, expressed in thymus (in thymocytes), spleen (in splenocytes), lymph node and lung. Highly expressed in T lymphocytes. Expressed in B cells and in distinct lineages of hematopoietic bone marrow cells, including natural killer, B, T, myeloid and erythroid lineages. Expressed in liver endothelial cells.

The protein localises to the lysosome. It localises to the lysosome membrane. It is found in the endosome. The protein resides in the multivesicular body membrane. Its subcellular location is the endosome membrane. Its function is as follows. Plays a role in T lymphocyte development and the optimal generation of CD4/CD8 double-positive thymocytes. Inhibitor of GSK3A. May act by sequestering GSK3A in cytoplasmic vesicles and impairing its translocation to the nucleus. Consequently, impairs GSK3A-dependent transcriptional program and regulation of the DNA damage response occurring during T cells proliferation. Required for the survival of bone marrow hematopoietic stem cells, as well as of peripheral T cells, natural killer (NK) and NK T-cell development and the maintenance of normal liver function. May promote the survival of mature T lymphocytes upon cytokine withdrawal. May regulate Ca(2+) homeostasis by modulating lysosomal Ca(2+) stores, preventing its accumulation in the absence of T cell activation. May play a role in mitochondrial DNA segregation in hematopoietic tissues. Is a regulator of liver endothelial cell homeostasis. In Mus musculus (Mouse), this protein is GTPase IMAP family member 5 (Gimap5).